The sequence spans 892 residues: Nitrogen assimilation transcription factor nirA (892 aa).

A disordered region spans residues 1 to 32 (MGEKLDPELSSDGPHTKSSSKGQGTSTDNAPA). Low complexity predominate over residues 16–27 (TKSSSKGQGTST). The zn(2)-C6 fungal-type DNA-binding region spans 42-70 (CIACRRRKSKCDGNLPSCAACSSVYHTTC). Disordered stretches follow at residues 646–714 (GPWD…SGPV), 731–761 (AHNEARQPEPTYLRPVSTSYGPVPSTQSAQE), and 842–892 (PNIP…SFQR). Low complexity predominate over residues 649–674 (DQAASPSTTSDSPPSVSSQSVVATTD). Composition is skewed to polar residues over residues 675–714 (LSQPVSQSAGNQPANPSMGTSPNLTQPVASQYSSTPSGPV), 746–761 (VSTSYGPVPSTQSAQE), and 876–892 (NVNSNQTNMIFPGSFQR).

It localises to the nucleus. Pathway-specific regulatory gene of nitrate assimilation; it activates the transcription of the genes for nitrate and nitrite reductases (niaD and niiA). The sequence is that of Nitrogen assimilation transcription factor nirA (nirA) from Emericella nidulans (strain FGSC A4 / ATCC 38163 / CBS 112.46 / NRRL 194 / M139) (Aspergillus nidulans).